A 355-amino-acid chain; its full sequence is Histidinol-phosphate aminotransferase (355 aa).

Lys-218 carries the post-translational modification N6-(pyridoxal phosphate)lysine.

Belongs to the class-II pyridoxal-phosphate-dependent aminotransferase family. Histidinol-phosphate aminotransferase subfamily. In terms of assembly, homodimer. Pyridoxal 5'-phosphate serves as cofactor.

The enzyme catalyses L-histidinol phosphate + 2-oxoglutarate = 3-(imidazol-4-yl)-2-oxopropyl phosphate + L-glutamate. It functions in the pathway amino-acid biosynthesis; L-histidine biosynthesis; L-histidine from 5-phospho-alpha-D-ribose 1-diphosphate: step 7/9. The sequence is that of Histidinol-phosphate aminotransferase from Chlorobaculum parvum (strain DSM 263 / NCIMB 8327) (Chlorobium vibrioforme subsp. thiosulfatophilum).